Consider the following 465-residue polypeptide: Glutamate--tRNA ligase (465 aa).

The short motif at 11–21 (PSPTGFIHLGN) is the 'HIGH' region element. Residues 118–139 (GEKPRYDGTWRPAPGKILPPPP) form a disordered region. The 'KMSKS' region motif lies at 243–247 (KMSKR). K246 is a binding site for ATP.

This sequence belongs to the class-I aminoacyl-tRNA synthetase family. Glutamate--tRNA ligase type 1 subfamily. In terms of assembly, monomer.

It is found in the cytoplasm. It carries out the reaction tRNA(Glu) + L-glutamate + ATP = L-glutamyl-tRNA(Glu) + AMP + diphosphate. Catalyzes the attachment of glutamate to tRNA(Glu) in a two-step reaction: glutamate is first activated by ATP to form Glu-AMP and then transferred to the acceptor end of tRNA(Glu). This is Glutamate--tRNA ligase from Ralstonia pickettii (strain 12J).